The sequence spans 526 residues: Probable feruloyl esterase B-1 (526 aa).

Positions 1–19 are cleaved as a signal peptide; it reads MPSLRRLLPFLAAGSAALA. 2 disulfide bridges follow: Cys-28-Cys-75 and Cys-63-Cys-114. 4 N-linked (GlcNAc...) asparagine glycosylation sites follow: Asn-53, Asn-85, Asn-98, and Asn-138. 3 cysteine pairs are disulfide-bonded: Cys-187–Cys-441, Cys-256–Cys-273, and Cys-282–Cys-291. Residue Ser-188 is the Acyl-ester intermediate of the active site. An N-linked (GlcNAc...) asparagine glycan is attached at Asn-246. The Ca(2+) site is built by Asp-257, Asp-260, Ala-262, Asp-264, and Ile-266. Asn-287 and Asn-311 each carry an N-linked (GlcNAc...) asparagine glycan. Active-site charge relay system residues include Asp-400 and His-440. N-linked (GlcNAc...) asparagine glycosylation is found at Asn-490 and Asn-516. Cys-503 and Cys-525 are disulfide-bonded.

It belongs to the tannase family.

It localises to the secreted. It carries out the reaction feruloyl-polysaccharide + H2O = ferulate + polysaccharide.. In terms of biological role, involved in degradation of plant cell walls. Hydrolyzes the feruloyl-arabinose ester bond in arabinoxylans as well as the feruloyl-galactose and feruloyl-arabinose ester bonds in pectin. This is Probable feruloyl esterase B-1 (faeB-1) from Aspergillus flavus (strain ATCC 200026 / FGSC A1120 / IAM 13836 / NRRL 3357 / JCM 12722 / SRRC 167).